The sequence spans 531 residues: MKAESSNESFIIGQRVHSLNDSRRVGTVKYVGDVEGYSGTWIGVDWDQDGDGKHNGSVNGVFYFNGRSQSSASFVRSQNLSRGITLLQALELRYRTISTKDEEDEMYVLSAGNRRVSIQLLGGDKIQDKLSRFEELTSASLSYLGVSSLGVSSDLGSILPNLKLLDLTGNLISDWEEIGALCEQLPALTTLNLSCNSLSSDIKSLPQLKNIRVLVLNNSGLSWTQVEILRRSLPGIEELHLMGNMISTITSTSSSDDQAFNSLRLLNLDDNCISDWSEVLKLSQLPCLEQLYLNKNKLSRIFQSVNGTESSEKGSDPFPSLSCLLLGANNIGDLASVDALNGFPQLVDIRLSENPISDPVRGGVPRFVLVARLTKVQVLNGSEVRAREKKDSEIRYVRMVMSKLNDKSGEIELLHPRFYELKKLHGIEDERASAENSGPKNIASGLISITLKCVGPSMGEKPHLTKKLPGSITVGKLKILSENFFKLKSIKPRLFLQEEGSPFPTALDDETATLLDVGICDGSTLLVDEES.

The 45-residue stretch at 32 to 76 (GDVEGYSGTWIGVDWDQDGDGKHNGSVNGVFYFNGRSQSSASFVR) folds into the CAP-Gly domain. LRR repeat units lie at residues 84–109 (ITLL…MYVL), 159–183 (LPNL…ALCE), 185–213 (LPAL…NIRV), 233–256 (LPGI…SSSD), 260–284 (FNSL…KLSQ), 285–308 (LPCL…VNGT), 318–342 (FPSL…ALNG), 344–366 (PQLV…GVPR), and 474–497 (VGKL…LFLQ).

The protein belongs to the TBCE family. Supercomplex made of cofactors A to E. Cofactors A and D function by capturing and stabilizing tubulin in a quasi-native conformation. Cofactor E binds to the cofactor D-tubulin complex; interaction with cofactor C then causes the release of tubulin polypeptides that are committed to the native state.

The protein resides in the cytoplasm. Essential tubulin-folding protein involved in the tubulin folding pathway. Not essential for cell viability. Probably involved in the binding of alpha-tubulin in the multimeric supercomplex. This is Tubulin-folding cofactor E (TFCE) from Arabidopsis thaliana (Mouse-ear cress).